Consider the following 418-residue polypeptide: Tyrosine--tRNA ligase (418 aa).

Position 34 (tyrosine 34) interacts with L-tyrosine. The short motif at 39–48 is the 'HIGH' region element; it reads PTADSLHLGH. L-tyrosine is bound by residues tyrosine 169 and glutamine 173. The short motif at 229–233 is the 'KMSKS' region element; that stretch reads KFGKS. Lysine 232 provides a ligand contact to ATP. The region spanning 352–418 is the S4 RNA-binding domain; that stretch reads NNIVELLVSS…GKKKYFVLTY (67 aa).

It belongs to the class-I aminoacyl-tRNA synthetase family. TyrS type 1 subfamily. As to quaternary structure, homodimer.

It is found in the cytoplasm. It catalyses the reaction tRNA(Tyr) + L-tyrosine + ATP = L-tyrosyl-tRNA(Tyr) + AMP + diphosphate + H(+). Catalyzes the attachment of tyrosine to tRNA(Tyr) in a two-step reaction: tyrosine is first activated by ATP to form Tyr-AMP and then transferred to the acceptor end of tRNA(Tyr). This chain is Tyrosine--tRNA ligase, found in Streptococcus pneumoniae (strain Taiwan19F-14).